A 740-amino-acid chain; its full sequence is Catalase-peroxidase (740 aa).

Positions 1–44 (MSDSCPVAHDGNTASTSESENPAIPSPTPTGNRPRTNRDWWPNQ) are disordered. A cross-link (tryptophyl-tyrosyl-methioninium (Trp-Tyr) (with M-257)) is located at residues 109–231 (WHAAGTYRIA…LGAVQMGLIY (123 aa)). Catalysis depends on His-110, which acts as the Proton acceptor. Positions 231–257 (YVNPEGPNGQPDPVAAARDIRETFARM) form a cross-link, tryptophyl-tyrosyl-methioninium (Tyr-Met) (with W-109). Position 272 (His-272) interacts with heme b.

The protein belongs to the peroxidase family. Peroxidase/catalase subfamily. Homodimer or homotetramer. Heme b serves as cofactor. Formation of the three residue Trp-Tyr-Met cross-link is important for the catalase, but not the peroxidase activity of the enzyme.

It carries out the reaction H2O2 + AH2 = A + 2 H2O. The enzyme catalyses 2 H2O2 = O2 + 2 H2O. Bifunctional enzyme with both catalase and broad-spectrum peroxidase activity. This chain is Catalase-peroxidase, found in Rhodococcus erythropolis (strain PR4 / NBRC 100887).